A 317-amino-acid polypeptide reads, in one-letter code: Apolipoprotein E (317 aa).

An N-terminal signal peptide occupies residues 1–18 (MKVLWAALLVTFLAGCQA). 8 tandem repeats follow at residues 80 to 101 (ALMD…EQLT), 102 to 123 (PVAE…ARLG), 124 to 145 (ADME…AMLG), 146 to 167 (QSTE…KRLL), 168 to 189 (RDAD…EGAE), 190 to 211 (RGVS…VRAA), 212 to 233 (TVGS…ERLR), and 234 to 255 (ARME…EQVA). An 8 X 22 AA approximate tandem repeats region spans residues 80–255 (ALMDETMKEL…RLDEVKEQVA (176 aa)). Methionine sulfoxide is present on Met-143. At Ser-147 the chain carries Phosphoserine. The tract at residues 158 to 168 (HLRKLRKRLLR) is LDL and other lipoprotein receptors binding. Residue 162-165 (LRKR) coordinates heparin. Residues 210–290 (AATVGSLAGQ…SWFEPLVEDM (81 aa)) form a lipid-binding and lipoprotein association region. 229–236 (GERLRARM) is a heparin binding site. The tract at residues 266-317 (QQIRLQAEAFQARLKSWFEPLVEDMQRQWAGLVEKVQAAMGTSAAPVPSDNH) is homooligomerization. The specificity for association with VLDL stretch occupies residues 278–290 (RLKSWFEPLVEDM).

This sequence belongs to the apolipoprotein A1/A4/E family. As to quaternary structure, homotetramer. May interact with ABCA1; functionally associated with ABCA1 in the biogenesis of HDLs. May interact with APP/A4 amyloid-beta peptide; the interaction is extremely stable in vitro but its physiological significance is unclear. May interact with MAPT. May interact with MAP2. In the cerebrospinal fluid, interacts with secreted SORL1. Interacts with PMEL; this allows the loading of PMEL luminal fragment on ILVs to induce fibril nucleation. APOE exists as multiple glycosylated and sialylated glycoforms within cells and in plasma. The extent of glycosylation and sialylation are tissue and context specific. Post-translationally, glycated in plasma VLDL. In terms of processing, phosphorylated by FAM20C in the extracellular medium.

The protein localises to the secreted. It is found in the extracellular space. The protein resides in the extracellular matrix. It localises to the extracellular vesicle. Its subcellular location is the endosome. The protein localises to the multivesicular body. Functionally, APOE is an apolipoprotein, a protein associating with lipid particles, that mainly functions in lipoprotein-mediated lipid transport between organs via the plasma and interstitial fluids. APOE is a core component of plasma lipoproteins and is involved in their production, conversion and clearance. Apolipoproteins are amphipathic molecules that interact both with lipids of the lipoprotein particle core and the aqueous environment of the plasma. As such, APOE associates with chylomicrons, chylomicron remnants, very low density lipoproteins (VLDL) and intermediate density lipoproteins (IDL) but shows a preferential binding to high-density lipoproteins (HDL). It also binds a wide range of cellular receptors including the LDL receptor/LDLR, the LDL receptor-related proteins LRP1, LRP2 and LRP8 and the very low-density lipoprotein receptor/VLDLR that mediate the cellular uptake of the APOE-containing lipoprotein particles. Finally, APOE also has a heparin-binding activity and binds heparan-sulfate proteoglycans on the surface of cells, a property that supports the capture and the receptor-mediated uptake of APOE-containing lipoproteins by cells. A main function of APOE is to mediate lipoprotein clearance through the uptake of chylomicrons, VLDLs, and HDLs by hepatocytes. APOE is also involved in the biosynthesis by the liver of VLDLs as well as their uptake by peripheral tissues ensuring the delivery of triglycerides and energy storage in muscle, heart and adipose tissues. By participating in the lipoprotein-mediated distribution of lipids among tissues, APOE plays a critical role in plasma and tissues lipid homeostasis. APOE is also involved in two steps of reverse cholesterol transport, the HDLs-mediated transport of cholesterol from peripheral tissues to the liver, and thereby plays an important role in cholesterol homeostasis. First, it is functionally associated with ABCA1 in the biogenesis of HDLs in tissues. Second, it is enriched in circulating HDLs and mediates their uptake by hepatocytes. APOE also plays an important role in lipid transport in the central nervous system, regulating neuron survival and sprouting. This Gorilla gorilla gorilla (Western lowland gorilla) protein is Apolipoprotein E (APOE).